Reading from the N-terminus, the 233-residue chain is Delta-actitoxin-Amc1a (233 aa).

The signal sequence occupies residues Met1–Ala18. Propeptides lie at residues Lys19–Arg29 and Glu30–Pro33. A Hydroxyproline modification is found at Pro39. Disulfide bonds link Cys40-Cys51 and Cys43-Cys58. 2 propeptides span residues Arg61–Arg63 and Glu64–Pro67. Pro73 carries the hydroxyproline modification. 2 disulfides stabilise this stretch: Cys74-Cys85 and Cys77-Cys92. 2 consecutive propeptides follow at residues Arg95–Arg97 and Glu98–Pro101. Residue Pro107 is modified to Hydroxyproline. Disulfide bonds link Cys108–Cys119 and Cys111–Cys126. 2 propeptides span residues Arg129–Arg131 and Glu132–Pro135. Pro141 carries the post-translational modification Hydroxyproline. 2 disulfides stabilise this stretch: Cys142/Cys153 and Cys145/Cys160. Propeptides lie at residues Arg163–Arg165 and Glu166–Pro169. Pro175 is modified (hydroxyproline). Cystine bridges form between Cys176–Cys187 and Cys179–Cys194. 2 propeptides span residues Arg197 to Arg199 and Glu200 to Pro203. At Pro209 the chain carries Hydroxyproline. 2 cysteine pairs are disulfide-bonded: Cys210/Cys221 and Cys213/Cys228. Residues Arg231–Arg233 constitute a propeptide that is removed on maturation.

The protein belongs to the sea anemone BBH family. Each Am I peptide may contain 2 disulfide bonds. Post-translationally, the precursor protein seems to be processed in the following sequence: release of the signal peptide and of the propeptide, production of six identical 34-residue peptides by cleavage between Arg and Glu, release of four N-terminal and three C-terminal residues from each peptide and hydroxylation of each Pro in position 6 of the resulting 27-residue peptides.

The protein localises to the secreted. It is found in the nematocyst. In terms of biological role, may inhibit voltage-gated sodium channels (Nav). The protein is Delta-actitoxin-Amc1a of Antheopsis maculata (Sea anemone).